The following is a 486-amino-acid chain: Siroheme synthase (486 aa).

Positions M1 to V204 are precorrin-2 dehydrogenase /sirohydrochlorin ferrochelatase. Residues H22–I23 and E43–K44 each bind NAD(+). S128 bears the Phosphoserine mark. The tract at residues G216–A486 is uroporphyrinogen-III C-methyltransferase. Residue P225 coordinates S-adenosyl-L-methionine. The active-site Proton acceptor is the D248. The Proton donor role is filled by K270. S-adenosyl-L-methionine is bound by residues G301–D303, V306, T331–A332, M383, and G412.

It in the N-terminal section; belongs to the precorrin-2 dehydrogenase / sirohydrochlorin ferrochelatase family. In the C-terminal section; belongs to the precorrin methyltransferase family.

The enzyme catalyses uroporphyrinogen III + 2 S-adenosyl-L-methionine = precorrin-2 + 2 S-adenosyl-L-homocysteine + H(+). The catalysed reaction is precorrin-2 + NAD(+) = sirohydrochlorin + NADH + 2 H(+). It carries out the reaction siroheme + 2 H(+) = sirohydrochlorin + Fe(2+). It functions in the pathway cofactor biosynthesis; adenosylcobalamin biosynthesis; precorrin-2 from uroporphyrinogen III: step 1/1. It participates in cofactor biosynthesis; adenosylcobalamin biosynthesis; sirohydrochlorin from precorrin-2: step 1/1. The protein operates within porphyrin-containing compound metabolism; siroheme biosynthesis; precorrin-2 from uroporphyrinogen III: step 1/1. Its pathway is porphyrin-containing compound metabolism; siroheme biosynthesis; siroheme from sirohydrochlorin: step 1/1. It functions in the pathway porphyrin-containing compound metabolism; siroheme biosynthesis; sirohydrochlorin from precorrin-2: step 1/1. Multifunctional enzyme that catalyzes the SAM-dependent methylations of uroporphyrinogen III at position C-2 and C-7 to form precorrin-2 via precorrin-1. Then it catalyzes the NAD-dependent ring dehydrogenation of precorrin-2 to yield sirohydrochlorin. Finally, it catalyzes the ferrochelation of sirohydrochlorin to yield siroheme. The chain is Siroheme synthase from Actinobacillus pleuropneumoniae serotype 3 (strain JL03).